We begin with the raw amino-acid sequence, 269 residues long: MASSPKAPKSHRKFQSIYHPTRPLSLWQDNQHDQGEVRIEIIPLIDVVFCILTFFILGAVGLSRQQAISLDLPRASTGAPQMREMFMVSLDDLGQLYVEKQPVSQEQMVSALQNYHQYNPSGLIVLHASRNASYNDVVQLLDTLRTVGGDRVALATLPGDGQTPSGMNPNSFNNPNLGLPGMTPGNAFPNGANPGMSNFNNSNPGGSGAGVPNFSNTPLPGMPDANGNVSPNPGMNPGFPGGGAMSPDPNSQSPNLPGMGNTVPSAPQQ.

Residues 1–40 (MASSPKAPKSHRKFQSIYHPTRPLSLWQDNQHDQGEVRIE) are Cytoplasmic-facing. Residues 41–61 (IIPLIDVVFCILTFFILGAVG) traverse the membrane as a helical segment. At 62-269 (LSRQQAISLD…GNTVPSAPQQ (208 aa)) the chain is on the periplasmic side. Positions 190–269 (NGANPGMSNF…GNTVPSAPQQ (80 aa)) are disordered. Low complexity predominate over residues 193 to 204 (NPGMSNFNNSNP).

Belongs to the ExbD/TolR family.

It is found in the cell inner membrane. This is Putative biopolymer transport protein ExbD from Synechocystis sp. (strain ATCC 27184 / PCC 6803 / Kazusa).